The following is a 784-amino-acid chain: ATP-dependent zinc metalloprotease FTSH 9, chloroplastic/mitochondrial (784 aa).

Low complexity-rich tracts occupy residues 1 to 12 (MSALQASLLLRP), 24 to 34 (PLPSSSASFPR), and 42 to 53 (PLPLRALASEGP). The N-terminal 47 residues, 1–47 (MSALQASLLLRPLPSPLPPRRRLPLPSSSASFPRAGHHRRLPLPLRA), are a transit peptide targeting the chloroplast and mitochondrion. The tract at residues 1-71 (MSALQASLLL…DPPPPELPAA (71 aa)) is disordered. Residues 54–69 (QPAPSPAPDPPPPELP) show a composition bias toward pro residues. Transmembrane regions (helical) follow at residues 104–124 (WVLA…DWVV) and 267–287 (IFST…GAAA). Residue 368–375 (GSPGTGKT) coordinates ATP. Histidine 601 provides a ligand contact to Zn(2+). Residue glutamate 602 is part of the active site. Residues histidine 605 and aspartate 679 each contribute to the Zn(2+) site.

The protein in the N-terminal section; belongs to the AAA ATPase family. In the C-terminal section; belongs to the peptidase M41 family. The cofactor is Zn(2+).

The protein resides in the mitochondrion membrane. The protein localises to the plastid. It localises to the chloroplast thylakoid membrane. Its function is as follows. Probable ATP-dependent zinc metallopeptidase. The protein is ATP-dependent zinc metalloprotease FTSH 9, chloroplastic/mitochondrial (FTSH9) of Oryza sativa subsp. japonica (Rice).